The chain runs to 306 residues: Curved DNA-binding protein (306 aa).

The region spanning 5–69 is the J domain; that stretch reads DYYAIMGVKP…QRRAEYDQMW (65 aa).

Its subcellular location is the cytoplasm. The protein localises to the nucleoid. Its function is as follows. DNA-binding protein that preferentially recognizes a curved DNA sequence. It is probably a functional analog of DnaJ; displays overlapping activities with DnaJ, but functions under different conditions, probably acting as a molecular chaperone in an adaptive response to environmental stresses other than heat shock. Lacks autonomous chaperone activity; binds native substrates and targets them for recognition by DnaK. Its activity is inhibited by the binding of CbpM. This chain is Curved DNA-binding protein, found in Escherichia coli O17:K52:H18 (strain UMN026 / ExPEC).